A 239-amino-acid chain; its full sequence is Orotidine 5'-phosphate decarboxylase (239 aa).

Substrate is bound by residues aspartate 10, lysine 32, 59-68 (DLKLHDIPNT), threonine 122, arginine 184, glutamine 193, glycine 213, and arginine 214. Lysine 61 acts as the Proton donor in catalysis.

The protein belongs to the OMP decarboxylase family. Type 1 subfamily. In terms of assembly, homodimer.

It carries out the reaction orotidine 5'-phosphate + H(+) = UMP + CO2. Its pathway is pyrimidine metabolism; UMP biosynthesis via de novo pathway; UMP from orotate: step 2/2. Catalyzes the decarboxylation of orotidine 5'-monophosphate (OMP) to uridine 5'-monophosphate (UMP). The polypeptide is Orotidine 5'-phosphate decarboxylase (Shouchella clausii (strain KSM-K16) (Alkalihalobacillus clausii)).